Here is a 110-residue protein sequence, read N- to C-terminus: Protein OPG154 (110 aa).

A coiled-coil region spans residues 36 to 101; the sequence is VKADEDDNEE…AMISLAKKID (66 aa).

This sequence belongs to the orthopoxvirus OPG154 protein family. In terms of assembly, homohexamers, covalently linked. Interacts with OPG144 and OPG153.

It localises to the virion. In terms of biological role, structural protein involved in the envelopment of mature virion (MV) to form the wrapped virion (WV). The wrapping consists of the addition of Golgi membranes to the mature virion. Participates in mature virion (MV) movement within the infected cell. May play an indirect role in MV-cell fusion. The protein is Protein OPG154 (OPG154) of Vaccinia virus (strain Western Reserve) (VACV).